The chain runs to 549 residues: MWLCALVWASLAVCPIWGHPSSPPVVDTTKGKVLGKYVSLEGFTQPVAVFLGVPFAKPPLGSLRFAPPEPAEPWSFVKNTTTYPPMCSQDGVVGKLLADMLSTGKESIPLEFSEDCLYLNIYSPADLTKNSRLPVMVWIHGGGLIIGGASPYSGLALSAHENVVVVTIQYRLGIWGLFSTGDEHSRGNWAHLDQLAALRWVQDNIANFGGNPDSVTIFGESAGGVSVSALVLSPLAKNLFHRAISESGVVLTTNLDKKNTQAVAQMIATLSGCNNTSSAAMVQCLRQKTEAELLELTVKLDNTSMSTVIDGVVLPKTPEEILTEKSFNTVPYIVGFNKQEFGWIIPTMMGNLLSEGRMNEKMASSFLKRFSPNLNISESVIPAIIEKYLRGTDDPAKKKELLLDMFSDVFFGIPAVLMSRSLRDAGAPTYMYEFQYRPSFVSDQRPQTVQGDHGDEIFSVFGTPFLKEGASEEETNLSKLVMKFWANFARNGNPNGEGLPHWPKYDQKEGYLQIGATTQQAQKLKGEEVAFWTELLAKNPPQTEHTEHT.

An N-terminal signal peptide occupies residues 1–18; that stretch reads MWLCALVWASLAVCPIWG. N-linked (GlcNAc...) asparagine glycosylation is present at Asn-79. Cysteines 87 and 116 form a disulfide. The Acyl-ester intermediate role is filled by Ser-221. Cysteines 273 and 284 form a disulfide. N-linked (GlcNAc...) asparagine glycans are attached at residues Asn-274, Asn-275, and Asn-302. The Charge relay system role is filled by Glu-340. Asn-375 carries N-linked (GlcNAc...) asparagine glycosylation. Residue His-453 is the Charge relay system of the active site. Position 471 is a phosphoserine (Ser-471). Asn-476 is a glycosylation site (N-linked (GlcNAc...) asparagine). Residues 546–549 carry the Prevents secretion from ER motif; it reads TEHT.

The protein belongs to the type-B carboxylesterase/lipase family.

The protein resides in the endoplasmic reticulum lumen. It catalyses the reaction a carboxylic ester + H2O = an alcohol + a carboxylate + H(+). Involved in the detoxification of xenobiotics and in the activation of ester and amide prodrugs. Involved in the extracellular metabolism of lung surfactant. This Rattus norvegicus (Rat) protein is Carboxylesterase 1C (Ces1c).